A 211-amino-acid chain; its full sequence is Putative 3-methyladenine DNA glycosylase (211 aa).

The protein belongs to the DNA glycosylase MPG family.

The polypeptide is Putative 3-methyladenine DNA glycosylase (Granulibacter bethesdensis (strain ATCC BAA-1260 / CGDNIH1)).